Here is a 285-residue protein sequence, read N- to C-terminus: uncharacterized protein (285 aa).

Residues 6–26 (IKYFSTIIVAVVAVLAGWWLW) form a helical membrane-spanning segment.

It belongs to the membrane fusion protein (MFP) (TC 8.A.1) family.

The protein localises to the membrane. This is an uncharacterized protein from Escherichia coli (strain K12).